Consider the following 406-residue polypeptide: Glucose-1-phosphate adenylyltransferase (406 aa).

Alpha-D-glucose 1-phosphate is bound by residues Tyr100, Gly165, 181 to 182 (EK), and Ser199.

The protein belongs to the bacterial/plant glucose-1-phosphate adenylyltransferase family. As to quaternary structure, homotetramer.

It carries out the reaction alpha-D-glucose 1-phosphate + ATP + H(+) = ADP-alpha-D-glucose + diphosphate. Its pathway is glycan biosynthesis; glycogen biosynthesis. Its function is as follows. Involved in the biosynthesis of ADP-glucose, a building block required for the elongation reactions to produce glycogen. Catalyzes the reaction between ATP and alpha-D-glucose 1-phosphate (G1P) to produce pyrophosphate and ADP-Glc. The sequence is that of Glucose-1-phosphate adenylyltransferase from Streptomyces avermitilis (strain ATCC 31267 / DSM 46492 / JCM 5070 / NBRC 14893 / NCIMB 12804 / NRRL 8165 / MA-4680).